We begin with the raw amino-acid sequence, 803 residues long: Volume-regulated anion channel subunit LRRC8C (803 aa).

Residues 1 to 22 are Cytoplasmic-facing; that stretch reads MIPVTEFRQFSEQQPAFRVLKP. Residues 23 to 43 form a helical membrane-spanning segment; the sequence is WWDVFTDYLSVAMLMIGVFGC. Residues 44–125 lie on the Extracellular side of the membrane; it reads TLQVMQDKII…YERALHWYAK (82 aa). Cystine bridges form between C54–C308 and C115–C293. N-linked (GlcNAc...) asparagine glycans are attached at residues N64 and N70. The chain crosses the membrane as a helical span at residues 126–146; the sequence is YFPYLVLIHTLVFMLCSNFWF. At 147–266 the chain is on the cytoplasmic side; the sequence is KFPGSSSKIE…ILYAMYVRQT (120 aa). Positions 177–211 are disordered; it reads EVSGEDSEEKDNRKNNMNRSNTIQSGPEGSLVKSQ. The segment covering 191 to 211 has biased composition (polar residues); that stretch reads NNMNRSNTIQSGPEGSLVKSQ. Phosphoserine occurs at positions 212 and 215. The chain crosses the membrane as a helical span at residues 267 to 287; it reads VLKVIKFLIIIAYNSALVSKV. Residues 288–320 lie on the Extracellular side of the membrane; that stretch reads QFTVDCNVDIQDMTGYKNFSCNHTMAHLFSKLS. Residues 321–341 form a helical membrane-spanning segment; sequence FCYLCFVSIYGLTCLYTLYWL. Over 342-803 the chain is Cytoplasmic; that stretch reads FYRSLREYSF…SDVREQMKAD (462 aa). LRR repeat units lie at residues 397 to 420, 421 to 443, 446 to 466, 467 to 488, 490 to 513, 515 to 537, 541 to 563, 565 to 587, 588 to 611, 613 to 635, 637 to 659, 660 to 682, 684 to 705, 706 to 728, 730 to 751, 752 to 774, and 776 to 799; these read ENKL…KLQT, NAHN…VFEI, LQSL…IAQL, DNLQ…ALSF, KENL…MYGL, NLEE…TLES, LKSL…VVDV, SHLQ…NLKK, MTNL…VFSL, SLQE…SFQH, RKLT…IKKL, TSLE…LFLC, KIRY…IGVL, QSLQ…LYFC, KLKT…IGNL, LFLS…LGDC, and ALKR…VREQ.

Belongs to the LRRC8 family. As to quaternary structure, heterohexamer; oligomerizes with other LRRC8 proteins (LRRC8A, LRRC8B, LRRC8D and/or LRRC8E) to form a heterohexamer. Homoheptamer; inactive, likely because it is not targeted to the plasma membrane in the absence of LRRC8A. In vivo, the subunit composition may depend primarily on expression levels, and heterooligomeric channels containing various proportions of the different LRRC8 proteins may coexist.

It is found in the cell membrane. The protein resides in the endoplasmic reticulum membrane. The catalysed reaction is chloride(in) = chloride(out). It carries out the reaction iodide(out) = iodide(in). The enzyme catalyses taurine(out) = taurine(in). It catalyses the reaction 2',3'-cGAMP(out) = 2',3'-cGAMP(in). In terms of biological role, non-essential component of the volume-regulated anion channel (VRAC, also named VSOAC channel), an anion channel required to maintain a constant cell volume in response to extracellular or intracellular osmotic changes. The VRAC channel conducts iodide better than chloride and can also conduct organic osmolytes like taurine. Plays a redundant role in the efflux of amino acids, such as aspartate and glutamate, in response to osmotic stress. The VRAC channel also mediates transport of immunoreactive cyclic dinucleotide GMP-AMP (2'-3'-cGAMP), an immune messenger produced in response to DNA virus in the cytosol. Channel activity requires LRRC8A plus at least one other family member (LRRC8B, LRRC8C, LRRC8D or LRRC8E); channel characteristics depend on the precise subunit composition. This is Volume-regulated anion channel subunit LRRC8C from Rattus norvegicus (Rat).